The chain runs to 682 residues: Heat shock 70 kDa protein 9, mitochondrial (682 aa).

A mitochondrion-targeting transit peptide spans 1 to 46 (MASVALLRSFRRREVQMASVSAFKSVSANGKNSMFGKLGYLARPFC). The interval 640-682 (SKIGEHMSKGSGSSGSDGSSGEGTSGTEQTPEAEFEEASGSRK) is disordered. Positions 651 to 663 (GSSGSDGSSGEGT) are enriched in gly residues.

This sequence belongs to the heat shock protein 70 (TC 1.A.33) family. DnaK subfamily. As to quaternary structure, interacts with HSCB.

It localises to the mitochondrion. Its subcellular location is the cytoplasm. The protein localises to the cytosol. Functionally, chaperone involved in the maturation of iron-sulfur [Fe-S] cluster-containing proteins. Has a low intrinsic ATPase activity which is markedly stimulated by HSCB and ISU1. In cooperation with other chaperones, Hsp70s are key components that facilitate folding of de novo synthesized proteins, assist translocation of precursor proteins into organelles, and are responsible for degradation of damaged protein under stress conditions. The polypeptide is Heat shock 70 kDa protein 9, mitochondrial (Arabidopsis thaliana (Mouse-ear cress)).